The following is a 144-amino-acid chain: Large ribosomal subunit protein uL16m (144 aa).

The protein belongs to the universal ribosomal protein uL16 family.

It localises to the mitochondrion. In Dictyostelium discoideum (Social amoeba), this protein is Large ribosomal subunit protein uL16m (mrpl16).